The following is a 323-amino-acid chain: Formyltetrahydrofolate deformylase 1, mitochondrial (323 aa).

A mitochondrion-targeting transit peptide spans 1–25; sequence MIRRITERASGFAKNIPILKSSRFH. The 84-residue stretch at 41–124 folds into the ACT domain; the sequence is VHVFHCQDAV…SVVRVPSIDP (84 aa). The active site involves Asp-267.

Belongs to the PurU family. In terms of tissue distribution, expressed in leaves, cotyledons, roots, seeds and flowers.

It is found in the mitochondrion. It catalyses the reaction (6R)-10-formyltetrahydrofolate + H2O = (6S)-5,6,7,8-tetrahydrofolate + formate + H(+). In terms of biological role, deformylase involved in photorespiration. Prevents excessive accumulation of 5-formyl tetrahydrofolate (THF), a potent inhibitor of the Gly decarboxylase/Ser hydroxymethyltransferase complex. The protein is Formyltetrahydrofolate deformylase 1, mitochondrial (PURU1) of Arabidopsis thaliana (Mouse-ear cress).